Consider the following 1099-residue polypeptide: Protein DDB_G0287365 (1099 aa).

The signal sequence occupies residues 1–24; sequence MMSFNLILILIIFLILIQNYVIDG. A G8 domain is found at 47–174; that stretch reads KSWKKLKLPI…TKTTWTKLIS (128 aa). 5 N-linked (GlcNAc...) asparagine glycosylation sites follow: Asn62, Asn137, Asn664, Asn764, and Asn858.

The protein belongs to the CEMIP family.

The sequence is that of Protein DDB_G0287365 from Dictyostelium discoideum (Social amoeba).